The sequence spans 142 residues: Large ribosomal subunit protein mL43 (142 aa).

It belongs to the mitochondrion-specific ribosomal protein mL43 family. In terms of assembly, component of the mitochondrial large ribosomal subunit. Mature mitochondrial ribosomes consist of a small (37S) and a large (54S) subunit. The 37S subunit contains at least 33 different proteins and 1 molecule of RNA (15S). The 54S subunit contains at least 45 different proteins and 1 molecule of RNA (21S).

The protein resides in the mitochondrion. The protein is Large ribosomal subunit protein mL43 (MRPL51) of Eremothecium gossypii (strain ATCC 10895 / CBS 109.51 / FGSC 9923 / NRRL Y-1056) (Yeast).